A 341-amino-acid polypeptide reads, in one-letter code: Ribonucleoside-diphosphate reductase small chain A (341 aa).

Residues 1 to 20 (MGSLKEGQGRDMEEGESEEP) are disordered. Fe cation-binding residues include Asp-87, Glu-118, and His-121. The active site involves Tyr-125. Fe cation is bound by residues Glu-180, Glu-214, and His-217.

It belongs to the ribonucleoside diphosphate reductase small chain family. Homodimer and heterodimer with TSO2. Heterotetramer of two R1 and two R2 chains. A radical transfer pathway may occur between Tyr-125 of protein R2 and R1. Homodimer contains a dinuclear non-heme iron center and a stable tyrosyl radical essential for activity. A transfer pathway may occur between Tyr-125 of protein R2 and R1. Interacts with CSN7. Fe cation is required as a cofactor. As to expression, expressed in rosette leaves, cauline leaves, stems and flowers.

It is found in the cytoplasm. The enzyme catalyses a 2'-deoxyribonucleoside 5'-diphosphate + [thioredoxin]-disulfide + H2O = a ribonucleoside 5'-diphosphate + [thioredoxin]-dithiol. With respect to regulation, inhibited by phenol, paracetamol, 2,4,6-trimethylphenol, resveratrol, furfuryl mercaptan, 2-thiophenthiol, phenylhydrazine, and hydroxyurea. Its function is as follows. Provides the precursors necessary for DNA synthesis. Catalyzes the biosynthesis of deoxyribonucleotides from the corresponding ribonucleotides. This is Ribonucleoside-diphosphate reductase small chain A (RNR2A) from Arabidopsis thaliana (Mouse-ear cress).